The sequence spans 572 residues: MPQISRQEYAGLFGPTTGDKIRLGDTNLFIEIEKDLRGYGEESVYGGGKSLRDGMGANNHLTRDNGVLDLVITNVTIVDARLGVIKADVGIRDGKIAGIGKSGNPGVMDGVTPGMVVGVSTDAISGEHLILTAAGIDSHIHLISPQQAYHALSNGVATFFGGGIGPTDGTNGTTVTPGPWNIRQMLRSVEGLPVNVGILGKGNSYGRGPLLEQAIAGVVGYKVHEDWGATANALRHSLRMADEMDIQVSVHTDSLNECGYVEDTIDAFEGRTIHTFHTEGAGGGHAPDIIRVASQPNVLPSSTNPTLPYGVNSQAELFDMIMVCHNLNPNVPADVSFAESRVRPETIAAENVLHDMGVISMFSSDSQAMGRVGENWLRVMQTANAMKASRGKLPEDAPGNDNFRVLRYVAKITINPAIAQGVSHVIGSVEVGKMADLVLWDPRFFGAKPKMVIKGGMINWAAMGDPNASLPTPQPVFYRPMFGAMGKTMQDTCVTFVSQAALDDGVKEKAGLDRQVIAVKNCRTISKHDLVRNDQTPNIEVDPETFAVKVDGVHATCEPIDTAAMNQRYFFG.

The 439-residue stretch at 134–572 (AGIDSHIHLI…AAMNQRYFFG (439 aa)) folds into the Urease domain. Residues His-139, His-141, and Lys-222 each coordinate Ni(2+). At Lys-222 the chain carries N6-carboxylysine. Substrate is bound at residue His-224. Ni(2+)-binding residues include His-251 and His-277. Residue His-325 is the Proton donor of the active site. Asp-365 contacts Ni(2+).

Belongs to the metallo-dependent hydrolases superfamily. Urease alpha subunit family. In terms of assembly, heterotrimer of UreA (gamma), UreB (beta) and UreC (alpha) subunits. Three heterotrimers associate to form the active enzyme. The cofactor is Ni cation. In terms of processing, carboxylation allows a single lysine to coordinate two nickel ions.

It localises to the cytoplasm. It carries out the reaction urea + 2 H2O + H(+) = hydrogencarbonate + 2 NH4(+). Its pathway is nitrogen metabolism; urea degradation; CO(2) and NH(3) from urea (urease route): step 1/1. This Yersinia enterocolitica serotype O:8 / biotype 1B (strain NCTC 13174 / 8081) protein is Urease subunit alpha.